The primary structure comprises 201 residues: 3-isopropylmalate dehydratase small subunit (201 aa).

The protein belongs to the LeuD family. LeuD type 1 subfamily. Heterodimer of LeuC and LeuD.

It carries out the reaction (2R,3S)-3-isopropylmalate = (2S)-2-isopropylmalate. Its pathway is amino-acid biosynthesis; L-leucine biosynthesis; L-leucine from 3-methyl-2-oxobutanoate: step 2/4. Its function is as follows. Catalyzes the isomerization between 2-isopropylmalate and 3-isopropylmalate, via the formation of 2-isopropylmaleate. This chain is 3-isopropylmalate dehydratase small subunit, found in Methylorubrum extorquens (strain ATCC 14718 / DSM 1338 / JCM 2805 / NCIMB 9133 / AM1) (Methylobacterium extorquens).